The primary structure comprises 343 residues: Succinylglutamate desuccinylase (343 aa).

Positions 60, 63, and 157 each coordinate Zn(2+). The active site involves E221.

Belongs to the AspA/AstE family. Succinylglutamate desuccinylase subfamily. Requires Zn(2+) as cofactor.

It carries out the reaction N-succinyl-L-glutamate + H2O = L-glutamate + succinate. The protein operates within amino-acid degradation; L-arginine degradation via AST pathway; L-glutamate and succinate from L-arginine: step 5/5. Its function is as follows. Transforms N(2)-succinylglutamate into succinate and glutamate. This is Succinylglutamate desuccinylase from Idiomarina loihiensis (strain ATCC BAA-735 / DSM 15497 / L2-TR).